Reading from the N-terminus, the 362-residue chain is Peptide chain release factor 1 (362 aa).

Q235 is modified (N5-methylglutamine).

It belongs to the prokaryotic/mitochondrial release factor family. Post-translationally, methylated by PrmC. Methylation increases the termination efficiency of RF1.

It is found in the cytoplasm. In terms of biological role, peptide chain release factor 1 directs the termination of translation in response to the peptide chain termination codons UAG and UAA. The sequence is that of Peptide chain release factor 1 from Buchnera aphidicola subsp. Baizongia pistaciae (strain Bp).